The chain runs to 1020 residues: X-linked retinitis pigmentosa GTPase regulator (1020 aa).

6 RCC1 repeats span residues 54–105 (NKLY…STEG), 106–158 (GNVY…LTED), 159–208 (GRLF…VTTD), 209–261 (GELY…LTEN), 262–313 (AVYT…ITDI), and 314–367 (GLMY…FAAP). A phosphoserine mark is found at serine 418 and serine 518. 3 disordered regions span residues 609-776 (HENN…IISK), 790-906 (EIPE…KEKA), and 989-1020 (DNKD…CTIL). Composition is skewed to basic and acidic residues over residues 618-636 (LDAK…QKES), 644-665 (EKET…EKST), 685-698 (EENK…ESCK), 704-715 (DSERESVEKPDS), 760-771 (KLIEQGNEKETK), 790-802 (EIPE…EDSK), 816-853 (ENVK…LKLE), and 883-906 (SKTE…KEKA). Residues 996–1009 (NHMSQNHQNIPPTN) show a composition bias toward polar residues. Cysteine 1017 bears the Cysteine methyl ester mark. Residue cysteine 1017 is the site of S-geranylgeranyl cysteine attachment. Positions 1018-1020 (TIL) are cleaved as a propeptide — removed in mature form.

As to quaternary structure, interacts with SPATA7. Interacts with CEP290. Interacts with WHRN. Interacts with PDE6D. Interacts with RPGRIP1. Interacts with RPGRIP1L. PDE6D, RPGRIP1 and RPGRIP1L may compete for the same binding sites. Interacts with RAB37 and RAB8A (in GDP-bound forms); functions as GEF for RAB37 and RAB8A. Isoform 6 interacts with NPM1 (via C-terminus). Isoform 6 interacts with SMC1A and SMC3. In terms of processing, prenylated. Heart, brain, placenta, lung, liver, muscle, kidney, retina, pancreas and fetal retinal pigment epithelium. Isoform 3 is found only in the retina. Colocalizes with RPGRIP1 in the outer segment of rod photoreceptors and cone outer segments.

It is found in the cytoplasm. Its subcellular location is the cytoskeleton. The protein localises to the flagellum axoneme. The protein resides in the golgi apparatus. It localises to the cell projection. It is found in the cilium. Its subcellular location is the microtubule organizing center. The protein localises to the centrosome. The protein resides in the cilium basal body. It localises to the cilium axoneme. In terms of biological role, acts as a guanine-nucleotide releasing factor (GEF) for RAB8A and RAB37 by promoting the conversion of inactive RAB-GDP to the active form RAB-GTP. GEF activity towards RAB8A may facilitate ciliary trafficking by modulating ciliary intracellular localization of RAB8A. GEF activity towards RAB37 maintains autophagic homeostasis and retinal function. Involved in photoreceptor integrity. May control cilia formation by regulating actin stress filaments and cell contractility. May be involved in microtubule organization and regulation of transport in primary cilia. May play a critical role in spermatogenesis and in intraflagellar transport processes. This is X-linked retinitis pigmentosa GTPase regulator from Homo sapiens (Human).